The following is a 314-amino-acid chain: Torsin-2A (314 aa).

The signal sequence occupies residues 1 to 19; sequence MAVRWWIIPMLLLVPGSSG. Residue 86–93 coordinates ATP; it reads GWSGTGKT. N-linked (GlcNAc...) asparagine glycosylation is found at Asn142 and Asn283.

It belongs to the ClpA/ClpB family. Torsin subfamily. In terms of assembly, homohexamer.

The protein resides in the endoplasmic reticulum lumen. The sequence is that of Torsin-2A (tor2a) from Xenopus laevis (African clawed frog).